The sequence spans 412 residues: Double C2-like domain-containing protein beta (412 aa).

The tract at residues 1–36 is negatively regulates targeting to plasma membrane; the sequence is MTLRRRGEKATISIQEHMAIDVCPGPIRPIKQISDY. Residues 1–90 form a mediates interaction with DYNLT1 region; the sequence is MTLRRRGEKA…EDVDQLFGAY (90 aa). A disordered region spans residues 38 to 123; sequence PRFPRGLPPT…PDVDGYESDD (86 aa). Residues 43-58 show a composition bias toward pro residues; the sequence is GLPPTAAPRAPAPPDA. The segment covering 59–74 has biased composition (low complexity); that stretch reads PARSPAASASPRSPSD. Over residues 95–108 the composition is skewed to pro residues; it reads GPSPGPSPARPPAK. A compositionally biased stretch (acidic residues) spans 112–123; that stretch reads DEPDVDGYESDD. C2 domains are found at residues 126 to 250 and 266 to 399; these read ALGT…SICL and ERGR…ERWH. Ca(2+) contacts are provided by Asp-157, Asp-163, Asp-218, Asp-220, Asp-297, Asp-303, Asp-357, Asp-359, and Asp-365. The mediates interaction with STXBP3 stretch occupies residues 257-375; the sequence is DKAEDKSLEE…FIGGVVLGIN (119 aa). At Ser-411 the chain carries Phosphoserine.

As to quaternary structure, interacts with cytoplasmic dynein light chain DYNLT1. May interact with UNC13A; the interaction mediates targeting to the plasma membrane. Probably interacts with the SNARE (soluble N-ethylmaleimide-sensitive factor attached protein receptor) complex composed of SNAP25, STX1A and VAMP2; the interaction is calcium-dependent and competitive with SYT1. Interacts with STX4; the interaction is calcium-dependent, increased by insulin and glucose, and mediates vesicle fusion with plasma membrane in pancreatic cells and adipocytes. Interacts with STXBP3; the interaction is direct, occurs at the cell membrane and regulates glucose-stimulated insulin secretion. The cofactor is Ca(2+). As to expression, widely expressed. Expressed in pancreatic islet cells (at protein level).

It is found in the cytoplasm. The protein resides in the cytoplasmic granule. It localises to the cell membrane. Calcium sensor which positively regulates SNARE-dependent fusion of vesicles with membranes. Binds phospholipids in a calcium-dependent manner and may act at the priming stage of fusion by modifying membrane curvature to stimulate fusion. Involved in calcium-triggered exocytosis in chromaffin cells and calcium-dependent spontaneous release of neurotransmitter in absence of action potentials in neuronal cells. Involved both in glucose-stimulated insulin secretion in pancreatic cells and insulin-dependent GLUT4 transport to the plasma membrane in adipocytes. This chain is Double C2-like domain-containing protein beta (Doc2b), found in Mus musculus (Mouse).